We begin with the raw amino-acid sequence, 290 residues long: Mitochondrial dicarboxylate carrier (290 aa).

Solcar repeat units follow at residues 6–90 (TKRL…VKKQ), 101–188 (QKAL…IKQT), and 197–281 (DNLQ…LRLK). Helical transmembrane passes span 12–32 (WYFGGVAGAMAACCTHPLDLL), 65–84 (GVSASVLRQLTYSTTRFGIY), and 103–123 (ALLAGFAGACGGMVGTPGDLV). Lysine 159 carries the N6-acetyllysine modification. The next 3 membrane-spanning stretches (helical) occupy residues 163–182 (GATMATSRAILMTIGQLSFY), 203–223 (FASSISAASVATVMTQPLDVM), and 256–276 (GFIPAWARLAPHTVLTFIFFE).

The protein belongs to the mitochondrial carrier (TC 2.A.29) family.

The protein localises to the mitochondrion inner membrane. The catalysed reaction is (S)-malate(in) + phosphate(out) = (S)-malate(out) + phosphate(in). It carries out the reaction malonate(out) + (S)-malate(in) = malonate(in) + (S)-malate(out). It catalyses the reaction (S)-malate(in) + succinate(out) = (S)-malate(out) + succinate(in). The enzyme catalyses (S)-malate(in) + sulfate(out) = (S)-malate(out) + sulfate(in). The catalysed reaction is 2 thiosulfate(out) + (S)-malate(in) = 2 thiosulfate(in) + (S)-malate(out). It carries out the reaction malonate(out) + phosphate(in) = malonate(in) + phosphate(out). It catalyses the reaction succinate(out) + phosphate(in) = succinate(in) + phosphate(out). The enzyme catalyses sulfate(out) + phosphate(in) = sulfate(in) + phosphate(out). The catalysed reaction is 2 thiosulfate(out) + phosphate(in) = 2 thiosulfate(in) + phosphate(out). It carries out the reaction malonate(out) + succinate(in) = malonate(in) + succinate(out). Functionally, catalyzes the electroneutral exchange or flux of physiologically important metabolites such as dicarboxylates (malonate, malate, succinate), inorganic sulfur-containing anions, and phosphate, across mitochondrial inner membrane. Plays an important role in gluconeogenesis, fatty acid metabolism, urea synthesis, and sulfur metabolism, by supplying the substrates for the different metabolic processes. The polypeptide is Mitochondrial dicarboxylate carrier (Caenorhabditis elegans).